We begin with the raw amino-acid sequence, 304 residues long: Non-specific ribonucleoside hydrolase RihC (304 aa).

The active site involves H233.

This sequence belongs to the IUNH family. RihC subfamily.

Functionally, hydrolyzes both purine and pyrimidine ribonucleosides with a broad-substrate specificity. This chain is Non-specific ribonucleoside hydrolase RihC, found in Shigella dysenteriae serotype 1 (strain Sd197).